Here is a 539-residue protein sequence, read N- to C-terminus: Neutral amino acid transporter B(0) (539 aa).

The residue at position 1 (methionine 1) is an N-acetylmethionine. The Cytoplasmic portion of the chain corresponds to 1 to 52; that stretch reads MVADPPKGDPKGYAAAEPTANGVSMLVPIEDVGSLKGGRCGSGDQVRRCLRA. Residues 53-82 traverse the membrane as a helical segment; the sequence is NLLVLLTVVAVVAGVALGLGVSGAGGAFAL. Residues 83–95 lie on the Extracellular side of the membrane; the sequence is GPARLEAFSFPGE. A helical transmembrane segment spans residues 96–117; the sequence is LLLRLLKMIILPLVVCSLIGGA. Topologically, residues 118–131 are cytoplasmic; sequence ASLDPSALGRLGAW. Residues 132–154 traverse the membrane as a helical segment; the sequence is ALLFFLVTTLLASALGVGLALAL. Over 155 to 223 the chain is Extracellular; sequence QPGAAFAAIN…GTLVKVPTGG (69 aa). 2 N-linked (GlcNAc...) asparagine glycosylation sites follow: asparagine 164 and asparagine 213. Residues 224–247 form a helical membrane-spanning segment; sequence EVEGMNILGLVVFAIIFGVALRKL. The Cytoplasmic portion of the chain corresponds to 248 to 256; it reads GPEGELLIR. Residues 257–284 form a helical membrane-spanning segment; sequence FFNSFNDATMVLVSWIMWYAPVGILFLV. The Extracellular segment spans residues 285 to 305; the sequence is AGKIVEMENVGLLFASLGKYI. The helical transmembrane segment at 306–327 threads the bilayer; the sequence is LCCLLGHAIHGLLTLPLIYFLF. Over 328–332 the chain is Cytoplasmic; that stretch reads ARKNP. The segment at residues 333–363 is an intramembrane region (discontinuously helical); that stretch reads YRFLWGIMTPLATAFGTSSSSATLPLMMKCV. Residues 364–372 are Cytoplasmic-facing; it reads EEKNGVARH. A helical membrane pass occupies residues 373-399; the sequence is ISRFILPIGATVNMDGAALFQCVAAVF. Glycine 381, threonine 383, and asparagine 385 together coordinate Na(+). The Extracellular portion of the chain corresponds to 400–412; the sequence is IAQLNHRSLDFVK. The segment at residues 413 to 446 is an intramembrane region (discontinuously helical); that stretch reads IITILVTATASSVGAAGIPSGGVLTLAIILEAVN. Residues 447–459 lie on the Extracellular side of the membrane; that stretch reads LPVHDISLILAVD. A helical membrane pass occupies residues 460 to 481; sequence WLVDRSCTVLNVEGDAFGAGLL. The Na(+) site is built by asparagine 470 and aspartate 474. Topologically, residues 482-539 are cytoplasmic; sequence QSYLDRTENCNSVPELIQVKSEMPLAALPVPGEEGNPLLKGCPGPAGDADTCEKESVM. A phosphoserine mark is found at serine 493, serine 502, and serine 537. A disordered region spans residues 518–539; the sequence is PLLKGCPGPAGDADTCEKESVM.

Belongs to the dicarboxylate/amino acid:cation symporter (DAACS) (TC 2.A.23) family. SLC1A5 subfamily. In terms of assembly, homotrimer.

The protein resides in the cell membrane. It is found in the melanosome. It carries out the reaction L-glutamine(out) + L-serine(in) + Na(+)(out) = L-glutamine(in) + L-serine(out) + Na(+)(in). It catalyses the reaction L-glutamine(in) + L-serine(out) + Na(+)(out) = L-glutamine(out) + L-serine(in) + Na(+)(in). The catalysed reaction is L-threonine(in) + L-glutamine(out) + Na(+)(out) = L-threonine(out) + L-glutamine(in) + Na(+)(in). The enzyme catalyses L-threonine(out) + L-glutamine(in) + Na(+)(out) = L-threonine(in) + L-glutamine(out) + Na(+)(in). It carries out the reaction L-asparagine(in) + L-glutamine(out) + Na(+)(out) = L-asparagine(out) + L-glutamine(in) + Na(+)(in). It catalyses the reaction L-asparagine(out) + L-glutamine(in) + Na(+)(out) = L-asparagine(in) + L-glutamine(out) + Na(+)(in). The catalysed reaction is L-glutamine(in) + L-alanine(out) + Na(+)(out) = L-glutamine(out) + L-alanine(in) + Na(+)(in). The enzyme catalyses L-valine(out) + L-glutamine(in) + Na(+)(out) = L-valine(in) + L-glutamine(out) + Na(+)(in). It carries out the reaction L-glutamine(in) + L-methionine(out) + Na(+)(out) = L-glutamine(out) + L-methionine(in) + Na(+)(in). It catalyses the reaction L-glutamine(in) + L-glutamate(out) + Na(+)(out) + H(+)(out) = L-glutamine(out) + L-glutamate(in) + Na(+)(in) + H(+)(in). The catalysed reaction is D-serine(in) + L-glutamine(out) + Na(+)(out) = D-serine(out) + L-glutamine(in) + Na(+)(in). The enzyme catalyses D-serine(in) + L-alanine(out) + Na(+)(out) = D-serine(out) + L-alanine(in) + Na(+)(in). It carries out the reaction nitrate(in) = nitrate(out). It catalyses the reaction iodide(out) = iodide(in). The catalysed reaction is thiocyanate(in) = thiocyanate(out). Its function is as follows. Sodium-coupled antiporter of neutral amino acids. In a tri-substrate transport cycle, exchanges neutral amino acids between the extracellular and intracellular compartments, coupled to the inward cotransport of at least one sodium ion. The preferred substrate is the essential amino acid L-glutamine, a precursor for biosynthesis of proteins, nucleotides and amine sugars as well as an alternative fuel for mitochondrial oxidative phosphorylation. Exchanges L-glutamine with other neutral amino acids such as L-serine, L-threonine and L-asparagine in a bidirectional way. Provides L-glutamine to proliferating stem and activated cells driving the metabolic switch toward cell differentiation. The transport cycle is usually pH-independent, with the exception of L-glutamate. Transports extracellular L-glutamate coupled to the cotransport of one proton and one sodium ion in exchange for intracellular L-glutamine counter-ion. May provide for L-glutamate uptake in glial cells regulating glutamine/glutamate cycle in the nervous system. Can transport D-amino acids. Mediates D-serine release from the retinal glia potentially affecting NMDA receptor function in retinal neurons. Displays sodium- and amino acid-dependent but uncoupled channel-like anion conductance with a preference SCN(-) &gt;&gt; NO3(-) &gt; I(-) &gt; Cl(-). Through binding of the fusogenic protein syncytin-1/ERVW-1 may mediate trophoblasts syncytialization, the spontaneous fusion of their plasma membranes, an essential process in placental development. The chain is Neutral amino acid transporter B(0) (SLC1A5) from Bos taurus (Bovine).